Consider the following 738-residue polypeptide: Polyribonucleotide nucleotidyltransferase (738 aa).

Mg(2+)-binding residues include D514 and D520. A KH domain is found at 580 to 639 (PRIITVKIPVDKIGEVIGPKGKMINQIQEDTGAEITIEDDGTIYIGAQVGSQAEAARATI). The S1 motif domain maps to 651–723 (GERYLGTVVK…SRGKLSLIPV (73 aa)).

This sequence belongs to the polyribonucleotide nucleotidyltransferase family. Mg(2+) is required as a cofactor.

The protein resides in the cytoplasm. The enzyme catalyses RNA(n+1) + phosphate = RNA(n) + a ribonucleoside 5'-diphosphate. Its function is as follows. Involved in mRNA degradation. Catalyzes the phosphorolysis of single-stranded polyribonucleotides processively in the 3'- to 5'-direction. The sequence is that of Polyribonucleotide nucleotidyltransferase from Streptomyces avermitilis (strain ATCC 31267 / DSM 46492 / JCM 5070 / NBRC 14893 / NCIMB 12804 / NRRL 8165 / MA-4680).